The sequence spans 411 residues: ATP-dependent Clp protease ATP-binding subunit ClpX (411 aa).

Positions 1-49 constitute a ClpX-type ZB domain; it reads MSDKNIRCSFCGRTQKEVKKLIAGPGVYICDECVKLAYDIIEEEDSEEI. 4 residues coordinate Zn(2+): Cys8, Cys11, Cys30, and Cys33. 115-122 is a binding site for ATP; sequence PTGVGKTL.

The protein belongs to the ClpX chaperone family. Component of the ClpX-ClpP complex. Forms a hexameric ring that, in the presence of ATP, binds to fourteen ClpP subunits assembled into a disk-like structure with a central cavity, resembling the structure of eukaryotic proteasomes.

In terms of biological role, ATP-dependent specificity component of the Clp protease. It directs the protease to specific substrates. Can perform chaperone functions in the absence of ClpP. In Dictyoglomus turgidum (strain DSM 6724 / Z-1310), this protein is ATP-dependent Clp protease ATP-binding subunit ClpX.